The chain runs to 98 residues: Integration host factor subunit beta (98 aa).

This sequence belongs to the bacterial histone-like protein family. Heterodimer of an alpha and a beta chain.

Its function is as follows. This protein is one of the two subunits of integration host factor, a specific DNA-binding protein that functions in genetic recombination as well as in transcriptional and translational control. This chain is Integration host factor subunit beta, found in Teredinibacter turnerae (strain ATCC 39867 / T7901).